A 358-amino-acid chain; its full sequence is Sulfoquinovosyl glycerol transport ATP-binding protein SmoE (358 aa).

An ABC transporter domain is found at 4–234; sequence VSLRKLDKSY…PESVFVGGFV (231 aa). 36-43 serves as a coordination point for ATP; that stretch reads GPSGCGKS.

It belongs to the ABC transporter superfamily. The complex is probably composed of two ATP-binding proteins (SmoE), two transmembrane proteins (SmoG and SmoH) and a solute-binding protein (SmoF).

It localises to the cell inner membrane. Functionally, part of the ABC transporter complex SmoEFGH involved in sulfoquinovosyl glycerol (SQGro) uptake. Responsible for energy coupling to the transport system. In Agrobacterium fabrum (strain C58 / ATCC 33970) (Agrobacterium tumefaciens (strain C58)), this protein is Sulfoquinovosyl glycerol transport ATP-binding protein SmoE.